Consider the following 147-residue polypeptide: Small ribosomal subunit protein uS5 (147 aa).

The region spanning 9–72 (FEEVIVDIGR…DDAFKNIVEV (64 aa)) is the S5 DRBM domain.

This sequence belongs to the universal ribosomal protein uS5 family. In terms of assembly, part of the 30S ribosomal subunit. Contacts proteins S4 and S8.

In terms of biological role, with S4 and S12 plays an important role in translational accuracy. Functionally, located at the back of the 30S subunit body where it stabilizes the conformation of the head with respect to the body. The polypeptide is Small ribosomal subunit protein uS5 (Campylobacter fetus subsp. fetus (strain 82-40)).